The primary structure comprises 90 residues: Probable Fe(2+)-trafficking protein (90 aa).

Belongs to the Fe(2+)-trafficking protein family.

Functionally, could be a mediator in iron transactions between iron acquisition and iron-requiring processes, such as synthesis and/or repair of Fe-S clusters in biosynthetic enzymes. The protein is Probable Fe(2+)-trafficking protein of Aeromonas salmonicida (strain A449).